The primary structure comprises 213 residues: BREX protein BrxA (213 aa).

This sequence belongs to the BrxA family.

Functionally, BREX systems (bacteriophage exclusion) provide immunity against bacteriophage. A probably non-essential part of a type 1 BREX system which protects against dsDNA phage. This system allows phage adsorption but prevents phage DNA replication, without degradation of the phage DNA. Methylation of bacterial DNA by PglX guides self/non-self discrimination. When the brxA-brxB-brxC-pglX-pglZ-brxL genes are transformed into a susceptible E.coli strain (BW25113) they confer very high resistance to infection by bacteriophage VR7 and VpaE1, about 100-fold protection against lambda, T5 and T7 and no protection against RNA phage Qbeta, ssDNA phage M13 or dSDNA phage T4 and VR5. Glycosylated phage DNA is not susceptible to BREX. The BREX system does not confer resistance to lysogenic lambda phage, i.e. prophage that are integrated into the chromosomal DNA and then induced to form phage. This Escherichia coli O9:H4 (strain HS) protein is BREX protein BrxA.